We begin with the raw amino-acid sequence, 339 residues long: Pyrimidine monooxygenase RutA (339 aa).

FMN contacts are provided by residues 26-27 (IK), Asn-92, Glu-101, 117-118 (RY), and Ser-167.

The protein belongs to the NtaA/SnaA/DszA monooxygenase family. RutA subfamily.

The catalysed reaction is uracil + FMNH2 + NADH + O2 = (Z)-3-ureidoacrylate + FMN + NAD(+) + H2O + H(+). It carries out the reaction thymine + FMNH2 + NADH + O2 = (Z)-2-methylureidoacrylate + FMN + NAD(+) + H2O + H(+). Catalyzes the pyrimidine ring opening between N-3 and C-4 by an unusual flavin hydroperoxide-catalyzed mechanism, adding oxygen atoms in the process to yield ureidoacrylate peracid, that immediately reacts with FMN forming ureidoacrylate and FMN-N(5)-oxide. The FMN-N(5)-oxide reacts spontaneously with NADH to produce FMN. Requires the flavin reductase RutF to regenerate FMN in vivo. The protein is Pyrimidine monooxygenase RutA of Cronobacter sakazakii (strain ATCC BAA-894) (Enterobacter sakazakii).